Reading from the N-terminus, the 100-residue chain is Putative ESAT-6-like protein Y (100 aa).

It belongs to the WXG100 family.

This chain is Putative ESAT-6-like protein Y, found in Mycobacterium leprae (strain TN).